The primary structure comprises 358 residues: 3-dehydroquinate synthase (358 aa).

Residues 102-106 (GVVGD), 126-127 (TT), Lys-139, and Lys-148 contribute to the NAD(+) site. The Zn(2+) site is built by Glu-181, His-244, and His-260.

It belongs to the sugar phosphate cyclases superfamily. Dehydroquinate synthase family. It depends on Co(2+) as a cofactor. Zn(2+) serves as cofactor. The cofactor is NAD(+).

It is found in the cytoplasm. The catalysed reaction is 7-phospho-2-dehydro-3-deoxy-D-arabino-heptonate = 3-dehydroquinate + phosphate. The protein operates within metabolic intermediate biosynthesis; chorismate biosynthesis; chorismate from D-erythrose 4-phosphate and phosphoenolpyruvate: step 2/7. Catalyzes the conversion of 3-deoxy-D-arabino-heptulosonate 7-phosphate (DAHP) to dehydroquinate (DHQ). The chain is 3-dehydroquinate synthase from Symbiobacterium thermophilum (strain DSM 24528 / JCM 14929 / IAM 14863 / T).